A 101-amino-acid polypeptide reads, in one-letter code: Small ribosomal subunit protein uS14 (101 aa).

The segment covering 1–10 (MAKKSSIEKN) has biased composition (basic and acidic residues). The tract at residues 1-23 (MAKKSSIEKNNRRKRMTGNAAAK) is disordered.

Belongs to the universal ribosomal protein uS14 family. As to quaternary structure, part of the 30S ribosomal subunit. Contacts proteins S3 and S10.

Its function is as follows. Binds 16S rRNA, required for the assembly of 30S particles and may also be responsible for determining the conformation of the 16S rRNA at the A site. This is Small ribosomal subunit protein uS14 from Nitrobacter hamburgensis (strain DSM 10229 / NCIMB 13809 / X14).